A 416-amino-acid chain; its full sequence is GTPase Obg (416 aa).

The Obg domain occupies 1–157 (MFQDVLVITV…RRLRLELMLI (157 aa)). Disordered stretches follow at residues 25–44 (EKFV…GGSV) and 62–82 (TYKA…RGGE). Positions 32–42 (GPDGGDGGRGG) are enriched in gly residues. The segment covering 63 to 72 (YKAEDGEHGR) has biased composition (basic and acidic residues). The OBG-type G domain occupies 158-324 (ADVGLVGYPN…LKEALHALVR (167 aa)). GTP is bound by residues 164–171 (GYPNAGKS), 189–193 (FTTLS), 211–214 (DIPG), 277–280 (NKVD), and 305–307 (SAL). 2 residues coordinate Mg(2+): Ser-171 and Thr-191. Positions 336–414 (PRKEVQAGVE…IGGLEFEYIP (79 aa)) constitute an OCT domain.

The protein belongs to the TRAFAC class OBG-HflX-like GTPase superfamily. OBG GTPase family. In terms of assembly, monomer. Mg(2+) is required as a cofactor.

It localises to the cytoplasm. Its function is as follows. An essential GTPase which binds GTP, GDP and possibly (p)ppGpp with moderate affinity, with high nucleotide exchange rates and a fairly low GTP hydrolysis rate. Plays a role in control of the cell cycle, stress response, ribosome biogenesis and in those bacteria that undergo differentiation, in morphogenesis control. The polypeptide is GTPase Obg (Thermus thermophilus (strain ATCC BAA-163 / DSM 7039 / HB27)).